The primary structure comprises 628 residues: Chaperone protein HtpG (628 aa).

The interval 1–337 (MSEKKYTFET…SADLPLNVSR (337 aa)) is a; substrate-binding. The interval 338-554 (EILQHNKVID…DYGMSLHMQK (217 aa)) is b. Positions 555–628 (MMEEAGQGFM…FVKLVNKYIR (74 aa)) are c.

The protein belongs to the heat shock protein 90 family. In terms of assembly, homodimer.

The protein resides in the cytoplasm. Functionally, molecular chaperone. Has ATPase activity. The polypeptide is Chaperone protein HtpG (Francisella tularensis subsp. novicida (strain U112)).